Consider the following 660-residue polypeptide: Cysteine-rich receptor-like protein kinase 22 (660 aa).

An N-terminal signal peptide occupies residues 1–24 (MKQRSFLSILCFILLAFGVASVSA). 2 consecutive Gnk2-homologous domains span residues 25-128 (QTCI…NISF) and 137-250 (IEPQ…LFTF). The Extracellular portion of the chain corresponds to 25-294 (QTCIENRKYF…DSRGVSAGIV (270 aa)). N-linked (GlcNAc...) asparagine glycosylation is found at Asn-37, Asn-53, Asn-105, Asn-125, Asn-191, Asn-230, and Asn-256. Positions 264 to 273 (KPPMNVPRPP) are enriched in pro residues. Residues 264–283 (KPPMNVPRPPSVGHGANTTD) form a disordered region. Residues Asn-280 and Asn-284 are each glycosylated (N-linked (GlcNAc...) asparagine). Residues 295–315 (VVITVPAVVIVLILVVLGFFI) traverse the membrane as a helical segment. The Cytoplasmic portion of the chain corresponds to 316–660 (CWRRKSLQRT…DPLSEGLESG (345 aa)). A Protein kinase domain is found at 353–632 (FSKSNKLGEG…IVSMLTSNTI (280 aa)). ATP-binding positions include 359 to 367 (LGEGRFGEV) and Lys-381. Tyr-426 bears the Phosphotyrosine mark. Catalysis depends on Asp-478, which acts as the Proton acceptor. Ser-482 is subject to Phosphoserine. Thr-518 is modified (phosphothreonine). At Tyr-526 the chain carries Phosphotyrosine.

This sequence belongs to the protein kinase superfamily. Ser/Thr protein kinase family. CRK subfamily.

It is found in the membrane. The catalysed reaction is L-seryl-[protein] + ATP = O-phospho-L-seryl-[protein] + ADP + H(+). The enzyme catalyses L-threonyl-[protein] + ATP = O-phospho-L-threonyl-[protein] + ADP + H(+). The chain is Cysteine-rich receptor-like protein kinase 22 (CRK22) from Arabidopsis thaliana (Mouse-ear cress).